Here is a 643-residue protein sequence, read N- to C-terminus: Fructose-1,6-bisphosphatase class 3 (643 aa).

This sequence belongs to the FBPase class 3 family. Mn(2+) serves as cofactor.

The catalysed reaction is beta-D-fructose 1,6-bisphosphate + H2O = beta-D-fructose 6-phosphate + phosphate. It functions in the pathway carbohydrate biosynthesis; gluconeogenesis. The polypeptide is Fructose-1,6-bisphosphatase class 3 (Lacticaseibacillus paracasei (strain ATCC 334 / BCRC 17002 / CCUG 31169 / CIP 107868 / KCTC 3260 / NRRL B-441) (Lactobacillus paracasei)).